Here is a 243-residue protein sequence, read N- to C-terminus: Urease accessory protein UreF 2 (243 aa).

The protein belongs to the UreF family. As to quaternary structure, ureD, UreF and UreG form a complex that acts as a GTP-hydrolysis-dependent molecular chaperone, activating the urease apoprotein by helping to assemble the nickel containing metallocenter of UreC. The UreE protein probably delivers the nickel.

It localises to the cytoplasm. In terms of biological role, required for maturation of urease via the functional incorporation of the urease nickel metallocenter. The polypeptide is Urease accessory protein UreF 2 (Brucella suis (strain ATCC 23445 / NCTC 10510)).